Reading from the N-terminus, the 276-residue chain is MSSNSDHHISVEHTDGVATIRFTRPSKHNAASGQLLLETLEALYRLESDDSVGAIVLTGEGAVFSAGFDLEEVPMGPASEIQSHFRLKALYYHAVIHMLARIEKPTLAAINGPAVGGGLGMSLACDLAVCTDRATFLPAWMSIGIANDASSSFYLPRIVGYRRAMEWLLTNRTLGADEAYEWGVVNRVFSEADFQSRVGEIARQLAAAPTHLQGLVKNRIQEGSSETLESCTEHEVQNVIASVGHPHFAERLAMFRSKEMRSSALAVDLDAVCGGR.

66 to 71 (AGFDLE) provides a ligand contact to substrate. His-93 (proton acceptor) is an active-site residue. A substrate-binding site is contributed by Gly-117. Asp-148 serves as the catalytic Nucleophile. Arg-261 contacts substrate.

The protein belongs to the enoyl-CoA hydratase/isomerase family. Homotetramer.

The enzyme catalyses 4-chlorobenzoyl-CoA + H2O = 4-hydroxybenzoyl-CoA + chloride + H(+). It functions in the pathway xenobiotic degradation; 4-chlorobenzoate degradation; 4-hydroxybenzoate from 4-chlorobenzoate: step 2/3. Dehalogenates 4-chlorobenzoyl-CoA, 4-iodobenzoyl-CoA, 4-bromobenzoyl-CoA and, at a slower rate, 4-fluorobenzoyl-CoA. Does not dehalogenate 2-chlorobenzoyl-CoA or 3-chlorobenzoyl-CoA. This is 4-chlorobenzoyl coenzyme A dehalogenase-1 from Arthrobacter sp.